A 547-amino-acid chain; its full sequence is Serine beta-lactamase-like protein LACTB, mitochondrial (547 aa).

Residues 1–115 (MYRLMSAVTA…RAIESSRDLL (115 aa)) constitute a mitochondrion transit peptide. Residues 62 to 83 (GAAPAQSPAAPDPEASPLAEPP) are compositionally biased toward low complexity. Residues 62 to 96 (GAAPAQSPAAPDPEASPLAEPPQEQSLAPWSPQTP) are disordered. The Acyl-ester intermediate role is filled by S164. 2 positions are modified to N6-succinyllysine: K283 and K284. Residues K297 and K342 each carry the N6-acetyllysine modification.

This sequence belongs to the peptidase S12 family. Expressed predominantly in skeletal muscle.

Its subcellular location is the mitochondrion. Mitochondrial serine protease that acts as a regulator of mitochondrial lipid metabolism. Acts by decreasing protein levels of PISD, a mitochondrial enzyme that converts phosphatidylserine (PtdSer) to phosphatidylethanolamine (PtdEtn), thereby affecting mitochondrial lipid metabolism. It is unclear whether it acts directly by mediating proteolysis of PISD or by mediating proteolysis of another lipid metabolism protein. Acts as a tumor suppressor that has the ability to inhibit proliferation of multiple types of breast cancer cells: probably by promoting decreased levels of PISD, thereby affecting mitochondrial lipid metabolism. The protein is Serine beta-lactamase-like protein LACTB, mitochondrial of Homo sapiens (Human).